We begin with the raw amino-acid sequence, 415 residues long: Histidine--tRNA ligase (415 aa).

Belongs to the class-II aminoacyl-tRNA synthetase family. As to quaternary structure, homodimer.

The protein localises to the cytoplasm. It catalyses the reaction tRNA(His) + L-histidine + ATP = L-histidyl-tRNA(His) + AMP + diphosphate + H(+). The sequence is that of Histidine--tRNA ligase from Gluconobacter oxydans (strain 621H) (Gluconobacter suboxydans).